The primary structure comprises 60 residues: Putative SERF-like protein (60 aa).

Residues 1 to 53 (MTRGNQRDLARQKNQKKQADLTKGKRTDNLTVEQRKARDAELMREKQKKKEEA) are compositionally biased toward basic and acidic residues. A disordered region spans residues 1–60 (MTRGNQRDLARQKNQKKQADLTKGKRTDNLTVEQRKARDAELMREKQKKKEEAAAAGTSK).

It belongs to the SERF family.

This chain is Putative SERF-like protein, found in Drosophila melanogaster (Fruit fly).